The following is a 349-amino-acid chain: Zinc-type alcohol dehydrogenase-like protein PB24D3.08c (349 aa).

This sequence belongs to the zinc-containing alcohol dehydrogenase family. Quinone oxidoreductase subfamily.

The protein resides in the cytoplasm. Its subcellular location is the nucleus. This Schizosaccharomyces pombe (strain 972 / ATCC 24843) (Fission yeast) protein is Zinc-type alcohol dehydrogenase-like protein PB24D3.08c.